Consider the following 126-residue polypeptide: Probable small nuclear ribonucleoprotein Sm D1 (126 aa).

A Sm domain is found at 2 to 74; that stretch reads KLVRFLMKLS…IRYIILPDPL (73 aa). Positions 86–126 are disordered; that stretch reads RKKARAARAGASRGRGRGGMRGGRGGRGRGRGGPRGGGPRR. Residues 99–126 show a composition bias toward basic residues; the sequence is GRGRGGMRGGRGGRGRGRGGPRGGGPRR.

Belongs to the snRNP core protein family.

It is found in the nucleus. Its subcellular location is the cytoplasm. The protein localises to the cytosol. In terms of biological role, plays a role in pre-mRNA splicing as a core component of the spliceosomal U1, U2, U4 and U5 small nuclear ribonucleoproteins (snRNPs), the building blocks of the spliceosome. The protein is Probable small nuclear ribonucleoprotein Sm D1 (snr-3) of Caenorhabditis elegans.